Consider the following 265-residue polypeptide: Acetylglutamate kinase (265 aa).

Substrate-binding positions include 41–42 (GG), Arg63, and Asn156.

It belongs to the acetylglutamate kinase family. ArgB subfamily.

Its subcellular location is the cytoplasm. The catalysed reaction is N-acetyl-L-glutamate + ATP = N-acetyl-L-glutamyl 5-phosphate + ADP. It participates in amino-acid biosynthesis; L-arginine biosynthesis; N(2)-acetyl-L-ornithine from L-glutamate: step 2/4. Its function is as follows. Catalyzes the ATP-dependent phosphorylation of N-acetyl-L-glutamate. In Oceanobacillus iheyensis (strain DSM 14371 / CIP 107618 / JCM 11309 / KCTC 3954 / HTE831), this protein is Acetylglutamate kinase.